The following is a 76-amino-acid chain: DNA-directed RNA polymerase subunit omega (76 aa).

It belongs to the RNA polymerase subunit omega family. In terms of assembly, the RNAP catalytic core consists of 2 alpha, 1 beta, 1 beta' and 1 omega subunit. When a sigma factor is associated with the core the holoenzyme is formed, which can initiate transcription.

The catalysed reaction is RNA(n) + a ribonucleoside 5'-triphosphate = RNA(n+1) + diphosphate. In terms of biological role, promotes RNA polymerase assembly. Latches the N- and C-terminal regions of the beta' subunit thereby facilitating its interaction with the beta and alpha subunits. The chain is DNA-directed RNA polymerase subunit omega from Staphylococcus carnosus (strain TM300).